Here is a 712-residue protein sequence, read N- to C-terminus: Ribosomal RNA large subunit methyltransferase K/L (712 aa).

Positions 46-157 (GAYQALLHSR…REKLIVSLDL (112 aa)) constitute a THUMP domain.

This sequence belongs to the methyltransferase superfamily. RlmKL family.

It localises to the cytoplasm. The catalysed reaction is guanosine(2445) in 23S rRNA + S-adenosyl-L-methionine = N(2)-methylguanosine(2445) in 23S rRNA + S-adenosyl-L-homocysteine + H(+). It catalyses the reaction guanosine(2069) in 23S rRNA + S-adenosyl-L-methionine = N(2)-methylguanosine(2069) in 23S rRNA + S-adenosyl-L-homocysteine + H(+). Specifically methylates the guanine in position 2445 (m2G2445) and the guanine in position 2069 (m7G2069) of 23S rRNA. The sequence is that of Ribosomal RNA large subunit methyltransferase K/L from Haemophilus ducreyi (strain 35000HP / ATCC 700724).